Reading from the N-terminus, the 310-residue chain is uncharacterized protein (310 aa).

The disordered stretch occupies residues 1–70; it reads MAGNSQRRGA…ARGRTDETET (70 aa). Over residues 49 to 62 the composition is skewed to basic residues; the sequence is AAKRAKAQQRRPAR. The S-adenosyl-L-methionine site is built by Gly-262, Val-282, and Leu-291.

Belongs to the class IV-like SAM-binding methyltransferase superfamily. RNA methyltransferase TrmH family.

This is an uncharacterized protein from Mycobacterium ulcerans (strain Agy99).